The sequence spans 476 residues: Protein transport protein Sec61 subunit alpha-like 1 (476 aa).

Over 2–33 (AIKFLEVIKPFCAVLPEIQKPERKIQFREKVL) the chain is Cytoplasmic. Residues 34-53 (WTAITLFIFLVCCQIPLFGI) form a helical membrane-spanning segment. Topologically, residues 54–76 (MSSDSADPFYWMRVILASNRGTL) are lumenal. The chain crosses the membrane as a helical span at residues 77 to 96 (MELGISPIVTSGLIMQLLAG). Topologically, residues 97–117 (AKIIEVGDTPKDRALFNGAQK) are cytoplasmic. Residues 118–138 (LFGMIITIGQAIVYVMTGMYG) traverse the membrane as a helical segment. The Lumenal portion of the chain corresponds to 139–144 (DPSEMG). Residues 145-165 (AGICLLIIIQLFVAGLIVLLL) traverse the membrane as a helical segment. At 166–172 (DELLQKG) the chain is on the cytoplasmic side. A helical membrane pass occupies residues 173-193 (YGLGSGISLFIATNICETIVW). Topologically, residues 194-240 (KAFSPTTVNTGRGTEFEGAIIALFHLLATRTDKVRALREAFYRQNLP) are lumenal. The helical transmembrane segment at 241–261 (NLMNLIATVFVFAVVIYFQGF) threads the bilayer. Residues 262 to 288 (RVDLPIKSARYRGQYNTYPIKLFYTSN) are Cytoplasmic-facing. A helical membrane pass occupies residues 289–309 (IPIILQSALVSNLYVISQMLS). At 310–354 (TRFSGNFLVNLLGTWSDTSSGGPARAYPVGGLCYYLSPPESFGSV) the chain is on the lumenal side. Residues 355-375 (LDDPVHAVIYIVFMLGSCAFF) traverse the membrane as a helical segment. The Cytoplasmic portion of the chain corresponds to 376-420 (SKTWIEVSGSSAKDVAKQLKEQQMVMRGHRETSMVHELNRYIPTA). A helical membrane pass occupies residues 421-441 (AAFGGLCIGGLSVMADFLGAI). Over 442-445 (GSGT) the chain is Lumenal. A helical membrane pass occupies residues 446 to 462 (GILLAVTIIYQYFEIFV). At 463–476 (KEQSEVGSMGALLF) the chain is on the cytoplasmic side.

This sequence belongs to the SecY/SEC61-alpha family. As to quaternary structure, the SEC61 channel-forming translocon complex consists of channel-forming core components SEC61A1, SEC61B and SEC61G and different auxiliary components such as SEC62 and SEC63. The SEC61 channel associates with the multi-pass translocon (MPT) complex.

The protein localises to the endoplasmic reticulum membrane. Functionally, component of SEC61 channel-forming translocon complex that mediates transport of signal peptide-containing precursor polypeptides across the endoplasmic reticulum (ER). Forms a ribosome receptor and a gated pore in the ER membrane, both functions required for cotranslational translocation of nascent polypeptides. May cooperate with auxiliary protein SEC62, SEC63 and HSPA5/BiP to enable post-translational transport of small presecretory proteins. The SEC61 channel is also involved in ER membrane insertion of transmembrane proteins: it mediates membrane insertion of the first few transmembrane segments of proteins, while insertion of subsequent transmembrane regions of multi-pass membrane proteins is mediated by the multi-pass translocon (MPT) complex. Plays a role in the pronephric kidney tubule development. This Danio rerio (Zebrafish) protein is Protein transport protein Sec61 subunit alpha-like 1 (sec61al1).